We begin with the raw amino-acid sequence, 152 residues long: Small ribosomal subunit protein uS13 (152 aa).

This sequence belongs to the universal ribosomal protein uS13 family. As to quaternary structure, component of the small ribosomal subunit.

It is found in the cytoplasm. Its function is as follows. Component of the small ribosomal subunit. The ribosome is a large ribonucleoprotein complex responsible for the synthesis of proteins in the cell. This chain is Small ribosomal subunit protein uS13 (rps18), found in Ictalurus punctatus (Channel catfish).